A 947-amino-acid chain; its full sequence is Bifunctional glutamine synthetase adenylyltransferase/adenylyl-removing enzyme (947 aa).

Positions 1–440 (MTPLSSPLSQ…VFNELIGDDE (440 aa)) are adenylyl removase. The tract at residues 450–947 (SEPWREVWQD…ASWRKWLVAV (498 aa)) is adenylyl transferase.

This sequence belongs to the GlnE family. Mg(2+) serves as cofactor.

It catalyses the reaction [glutamine synthetase]-O(4)-(5'-adenylyl)-L-tyrosine + phosphate = [glutamine synthetase]-L-tyrosine + ADP. It carries out the reaction [glutamine synthetase]-L-tyrosine + ATP = [glutamine synthetase]-O(4)-(5'-adenylyl)-L-tyrosine + diphosphate. Functionally, involved in the regulation of glutamine synthetase GlnA, a key enzyme in the process to assimilate ammonia. When cellular nitrogen levels are high, the C-terminal adenylyl transferase (AT) inactivates GlnA by covalent transfer of an adenylyl group from ATP to specific tyrosine residue of GlnA, thus reducing its activity. Conversely, when nitrogen levels are low, the N-terminal adenylyl removase (AR) activates GlnA by removing the adenylyl group by phosphorolysis, increasing its activity. The regulatory region of GlnE binds the signal transduction protein PII (GlnB) which indicates the nitrogen status of the cell. This chain is Bifunctional glutamine synthetase adenylyltransferase/adenylyl-removing enzyme, found in Salmonella typhimurium (strain LT2 / SGSC1412 / ATCC 700720).